The following is a 142-amino-acid chain: ATP synthase epsilon chain (142 aa).

This sequence belongs to the ATPase epsilon chain family. In terms of assembly, F-type ATPases have 2 components, CF(1) - the catalytic core - and CF(0) - the membrane proton channel. CF(1) has five subunits: alpha(3), beta(3), gamma(1), delta(1), epsilon(1). CF(0) has three main subunits: a, b and c.

Its subcellular location is the cell inner membrane. Produces ATP from ADP in the presence of a proton gradient across the membrane. The polypeptide is ATP synthase epsilon chain (Pasteurella multocida (strain Pm70)).